A 164-amino-acid polypeptide reads, in one-letter code: Transcription antitermination protein NusB (164 aa).

Positions 144–164 (KNGRGLIDHTPPRAAKTDAKS) are disordered. Residues 149–164 (LIDHTPPRAAKTDAKS) show a composition bias toward basic and acidic residues.

Belongs to the NusB family.

Its function is as follows. Involved in transcription antitermination. Required for transcription of ribosomal RNA (rRNA) genes. Binds specifically to the boxA antiterminator sequence of the ribosomal RNA (rrn) operons. This Chlorobium phaeovibrioides (strain DSM 265 / 1930) (Prosthecochloris vibrioformis (strain DSM 265)) protein is Transcription antitermination protein NusB.